We begin with the raw amino-acid sequence, 715 residues long: ATP-dependent DNA helicase Hel308 (715 aa).

ATP contacts are provided by residues Q35 and 53–60; that span reads SPTGSGKT. The Helicase ATP-binding domain occupies 40–203; the sequence is KKGLLDGNRL…WLGAEPVATN (164 aa). The DEAH box motif lies at 152–155; that stretch reads DELH. In terms of domain architecture, Helicase C-terminal spans 236–442; the sequence is HGDDAIIAYT…ERAFYTFLLG (207 aa).

It belongs to the helicase family. Hel308 subfamily. In terms of assembly, monomer. Interacts with PINA ATPase which decreases both DNA helicase activities of this protein.

It catalyses the reaction Couples ATP hydrolysis with the unwinding of duplex DNA by translocating in the 3'-5' direction.. The enzyme catalyses ATP + H2O = ADP + phosphate + H(+). It carries out the reaction Couples ATP hydrolysis with the unwinding of duplex DNA at the replication fork by translocating in the 5'-3' direction. This creates two antiparallel DNA single strands (ssDNA). The leading ssDNA polymer is the template for DNA polymerase III holoenzyme which synthesizes a continuous strand.. PINA inhibits the (weak) 5'-3' but not the 3'-5' helicase activity of this protein on overhang substrates. DNA-dependent ATPase and 3'-5' DNA helicase that may be involved in repair of stalled replication forks. Functionally, has predominantly 3'-5' helicase activity but also a weak 5'-3' helicase activity. Has the ability to unwind replication forks, preferentially removing the lagging strand. Hjc, Hjm (Hel308) and branch migration ATPase PINA coordinate HJ migration and cleavage of replication forks in a coordinated way. The polypeptide is ATP-dependent DNA helicase Hel308 (Saccharolobus islandicus (strain REY15A) (Sulfolobus islandicus)).